The sequence spans 273 residues: Dermonecrotic toxin LapSicTox-alphaIB2 (273 aa).

His5 is an active-site residue. The Mg(2+) site is built by Glu25 and Asp27. The active-site Nucleophile is the His41. Disulfide bonds link Cys45–Cys51 and Cys47–Cys190. Asp85 contributes to the Mg(2+) binding site. Residue Asn250 is glycosylated (N-linked (GlcNAc...) asparagine).

This sequence belongs to the arthropod phospholipase D family. Class II subfamily. The cofactor is Mg(2+). In terms of tissue distribution, expressed by the venom gland.

It localises to the secreted. The catalysed reaction is an N-(acyl)-sphingosylphosphocholine = an N-(acyl)-sphingosyl-1,3-cyclic phosphate + choline. It catalyses the reaction an N-(acyl)-sphingosylphosphoethanolamine = an N-(acyl)-sphingosyl-1,3-cyclic phosphate + ethanolamine. It carries out the reaction a 1-acyl-sn-glycero-3-phosphocholine = a 1-acyl-sn-glycero-2,3-cyclic phosphate + choline. The enzyme catalyses a 1-acyl-sn-glycero-3-phosphoethanolamine = a 1-acyl-sn-glycero-2,3-cyclic phosphate + ethanolamine. Its function is as follows. Dermonecrotic toxins cleave the phosphodiester linkage between the phosphate and headgroup of certain phospholipids (sphingolipid and lysolipid substrates), forming an alcohol (often choline) and a cyclic phosphate. This toxin acts on sphingomyelin (SM). It may also act on ceramide phosphoethanolamine (CPE), lysophosphatidylcholine (LPC) and lysophosphatidylethanolamine (LPE), but not on lysophosphatidylserine (LPS), and lysophosphatidylglycerol (LPG). It acts by transphosphatidylation, releasing exclusively cyclic phosphate products as second products. Induces dermonecrosis, hemolysis, increased vascular permeability, edema, inflammatory response, and platelet aggregation. This chain is Dermonecrotic toxin LapSicTox-alphaIB2, found in Loxosceles apachea (Apache recluse spider).